The following is a 201-amino-acid chain: U1 small nuclear ribonucleoprotein C (201 aa).

A Matrin-type zinc finger spans residues 4 to 36 (YYCEYCDIYLTHSSPVGRRQHNQGRKHISAKIE). Low complexity predominate over residues 137–154 (IQKPYNNFDNKNNNYNNK). The segment at 137-176 (IQKPYNNFDNKNNNYNNKPITNSSYKNDKQDYRNNNENND) is disordered.

It belongs to the U1 small nuclear ribonucleoprotein C family. As to quaternary structure, U1 snRNP is composed of the 7 core Sm proteins B/B', D1, D2, D3, E, F and G that assemble in a heptameric protein ring on the Sm site of the small nuclear RNA to form the core snRNP, and at least 3 U1 snRNP-specific proteins U1-70K, U1-A and U1-C. U1-C interacts with U1 snRNA and the 5' splice-site region of the pre-mRNA.

Its subcellular location is the nucleus. Functionally, component of the spliceosomal U1 snRNP, which is essential for recognition of the pre-mRNA 5' splice-site and the subsequent assembly of the spliceosome. U1-C is directly involved in initial 5' splice-site recognition for both constitutive and regulated alternative splicing. The interaction with the 5' splice-site seems to precede base-pairing between the pre-mRNA and the U1 snRNA. Stimulates commitment or early (E) complex formation by stabilizing the base pairing of the 5' end of the U1 snRNA and the 5' splice-site region. This is U1 small nuclear ribonucleoprotein C from Plasmodium yoelii yoelii.